The following is a 328-amino-acid chain: Ketol-acid reductoisomerase (NADP(+)) (328 aa).

Residues 2 to 182 (AKIYRDGDAS…GATRAGVIET (181 aa)) enclose the KARI N-terminal Rossmann domain. Residues 25–28 (YGIQ), arginine 48, serine 53, and 83–86 (DMEQ) each bind NADP(+). The active site involves histidine 108. NADP(+) is bound at residue glycine 134. Residues 183–328 (TFAEETETDL…AEMRKLLFGP (146 aa)) form the KARI C-terminal knotted domain. Aspartate 191, glutamate 195, glutamate 227, and glutamate 231 together coordinate Mg(2+). Residue serine 252 coordinates substrate.

It belongs to the ketol-acid reductoisomerase family. Mg(2+) serves as cofactor.

The enzyme catalyses (2R)-2,3-dihydroxy-3-methylbutanoate + NADP(+) = (2S)-2-acetolactate + NADPH + H(+). It catalyses the reaction (2R,3R)-2,3-dihydroxy-3-methylpentanoate + NADP(+) = (S)-2-ethyl-2-hydroxy-3-oxobutanoate + NADPH + H(+). Its pathway is amino-acid biosynthesis; L-isoleucine biosynthesis; L-isoleucine from 2-oxobutanoate: step 2/4. It participates in amino-acid biosynthesis; L-valine biosynthesis; L-valine from pyruvate: step 2/4. Involved in the biosynthesis of branched-chain amino acids (BCAA). Catalyzes an alkyl-migration followed by a ketol-acid reduction of (S)-2-acetolactate (S2AL) to yield (R)-2,3-dihydroxy-isovalerate. In the isomerase reaction, S2AL is rearranged via a Mg-dependent methyl migration to produce 3-hydroxy-3-methyl-2-ketobutyrate (HMKB). In the reductase reaction, this 2-ketoacid undergoes a metal-dependent reduction by NADPH to yield (R)-2,3-dihydroxy-isovalerate. The sequence is that of Ketol-acid reductoisomerase (NADP(+)) from Pyrobaculum calidifontis (strain DSM 21063 / JCM 11548 / VA1).